Here is a 259-residue protein sequence, read N- to C-terminus: 5'-nucleotidase SurE (259 aa).

A divalent metal cation is bound by residues Asp-10, Asp-11, Ser-41, and Asn-96.

Belongs to the SurE nucleotidase family. A divalent metal cation serves as cofactor.

It localises to the cytoplasm. The enzyme catalyses a ribonucleoside 5'-phosphate + H2O = a ribonucleoside + phosphate. Its function is as follows. Nucleotidase that shows phosphatase activity on nucleoside 5'-monophosphates. The polypeptide is 5'-nucleotidase SurE (Wolinella succinogenes (strain ATCC 29543 / DSM 1740 / CCUG 13145 / JCM 31913 / LMG 7466 / NCTC 11488 / FDC 602W) (Vibrio succinogenes)).